The primary structure comprises 226 residues: Urease accessory protein UreG (226 aa).

The tract at residues 1-26 is disordered; it reads MPPHFLDGQPHGHTDRPRRVRQPGEP. Position 33 to 40 (33 to 40) interacts with GTP; it reads GPVGSGKT.

The protein belongs to the SIMIBI class G3E GTPase family. UreG subfamily. Homodimer. UreD, UreF and UreG form a complex that acts as a GTP-hydrolysis-dependent molecular chaperone, activating the urease apoprotein by helping to assemble the nickel containing metallocenter of UreC. The UreE protein probably delivers the nickel.

The protein resides in the cytoplasm. Functionally, facilitates the functional incorporation of the urease nickel metallocenter. This process requires GTP hydrolysis, probably effectuated by UreG. The sequence is that of Urease accessory protein UreG from Mycolicibacterium vanbaalenii (strain DSM 7251 / JCM 13017 / BCRC 16820 / KCTC 9966 / NRRL B-24157 / PYR-1) (Mycobacterium vanbaalenii).